The following is a 760-amino-acid chain: General transcription and DNA repair factor IIH helicase subunit XPD (760 aa).

The region spanning Gly-7–Asp-283 is the Helicase ATP-binding domain. Met-42–Thr-49 is a binding site for ATP. Cys-116, Cys-134, Cys-155, and Cys-190 together coordinate [4Fe-4S] cluster. Residues Asp-234–His-237 carry the DEAH box motif. Residues Met-438 to Leu-637 are mediates interaction with MMS19.

The protein belongs to the helicase family. RAD3/XPD subfamily. As to quaternary structure, component of the 7-subunit TFIIH core complex composed of XPB/ERCC3, XPD/ERCC2, GTF2H1, GTF2H2, GTF2H3, GTF2H4 and GTF2H5, which is active in NER. The core complex associates with the 3-subunit CDK-activating kinase (CAK) module composed of CCNH/cyclin H, CDK7 and MNAT1 to form the 10-subunit holoenzyme (holo-TFIIH) active in transcription. The interaction with GTF2H2 results in the stimulation of the 5'--&gt;3' helicase activity. Component of the MMXD complex, which includes CIAO1, ERCC2, CIAO2B, MMS19 and SLC25A5. Interacts with CIAO1 and CIAO2B; the interaction WITH CIAO2B is direct. Interacts with ATF7IP. Interacts directly with MMS19. Part of TBP-based Pol II pre-initiation complex (PIC), in which Pol II core assembles with general transcription factors and other specific initiation factors including GTF2E1, GTF2E2, GTF2F1, GTF2F2, TCEA1, ERCC2, ERCC3, GTF2H2, GTF2H3, GTF2H4, GTF2H5, GTF2A1, GTF2A2, GTF2B and TBP; this large multi-subunit PIC complex mediates DNA unwinding and targets Pol II core to the transcription start site where the first phosphodiester bond forms. It depends on Mg(2+) as a cofactor. The cofactor is [4Fe-4S] cluster. ISGylated.

The protein localises to the nucleus. Its subcellular location is the cytoplasm. It is found in the cytoskeleton. It localises to the spindle. The enzyme catalyses Couples ATP hydrolysis with the unwinding of duplex DNA at the replication fork by translocating in the 5'-3' direction. This creates two antiparallel DNA single strands (ssDNA). The leading ssDNA polymer is the template for DNA polymerase III holoenzyme which synthesizes a continuous strand.. It carries out the reaction ATP + H2O = ADP + phosphate + H(+). Functionally, ATP-dependent 5'-3' DNA helicase, component of the general transcription and DNA repair factor IIH (TFIIH) core complex, which is involved in general and transcription-coupled nucleotide excision repair (NER) of damaged DNA and, when complexed to CDK-activating kinase (CAK), involved in transcription by RNA polymerase II. In NER, TFIIH acts by opening DNA around the lesion to allow the excision of the damaged oligonucleotide and its replacement by a new DNA fragment. The ATP-dependent helicase activity of XPD/ERCC2 is required for DNA opening. In transcription, TFIIH has an essential role in transcription initiation. When the pre-initiation complex (PIC) has been established, TFIIH is required for promoter opening and promoter escape. Phosphorylation of the C-terminal tail (CTD) of the largest subunit of RNA polymerase II by the kinase module CAK controls the initiation of transcription. XPD/ERCC2 acts by forming a bridge between CAK and the core-TFIIH complex. Involved in the regulation of vitamin-D receptor activity. As part of the mitotic spindle-associated MMXD complex it plays a role in chromosome segregation. Might have a role in aging process and could play a causative role in the generation of skin cancers. The sequence is that of General transcription and DNA repair factor IIH helicase subunit XPD (Ercc2) from Mus musculus (Mouse).